We begin with the raw amino-acid sequence, 361 residues long: MSAVEIPHPSGCRVYDIRQQAQGSMNLQTAITDGLLSTPKTLPSLLLWDAEGLRLFDEFAHSASYYLRDKELTILRDRSHEIVTVVPAQSILVELGSLQKTGRLIRALEKQQKPVRYYAVDVSLSGLTNSLTELRKELGDLHFVDITGLLGTYDDCVNWISNPSGQDPMSSPTVTFLWMGNSISNLNHYIDSSSLLSQFRLACDASRLRCQFLIAADACQDAQVVRTAYDAQNPTLRAFLLNGLSHANSVLGRAAFSPQDWSCESGFYPEQGQLEVYYVPLRDVELDVGGDRVYRVQRGERVRAISSGKWGKKLMGRVACAAGFQMNHAWGDSAGQYYFYHLYGGTQTFTSGNERVSVAHR.

Belongs to the methyltransferase superfamily.

The protein operates within secondary metabolite biosynthesis. In terms of biological role, N-methyltransferase; part of the gene cluster that mediates the biosynthesis of benzomalvin A and D. The pathway begins with the loading of amino acid precursors onto the A domains of the non ribosomal peptide synthetases benY and benZ. BenY and the A1 domain of benZ are loaded with anthranilate (Anth), while the A2 domain of benZ is loaded with phenylalanine (Phe). N-methylation of Phe by the methyltransferase benX may happen before loading of Phe onto benZ, after loading of Phe, or after dipeptide formation. Condensation of Anth with the secondary amine of NmPhe or Phe is catalyzed by the C1 domain of benZ, forming a dipeptide intermediate. This is followed by in trans condensation of the Anth-NmPhe dipeptide with Anth bound to the T domain of benY by the C2 domain of benZ to form the linear tripeptide Anth-NmPhe-Anth. Cyclization and release of the tripeptide is then catalyzed by the C-terminal C domain of benY and the resulting 11-member macrocyclic intermediate is expected to spontaneously collapse to form the benzodiazepine core. Benzomalvin A is in conformational equilibrium with its atropisomer, benzomalvin D. The chain is N-methyltransferase benX from Aspergillus terreus.